A 312-amino-acid polypeptide reads, in one-letter code: GDP-L-fucose synthase (312 aa).

Residue 11-17 participates in NADP(+) binding; the sequence is GGRGMVG. Residue Tyr-136 is the Proton donor/acceptor of the active site. Residues Lys-140 and His-179 each coordinate NADP(+). Positions 187, 202, and 209 each coordinate substrate.

Belongs to the NAD(P)-dependent epimerase/dehydratase family. Fucose synthase subfamily.

It catalyses the reaction GDP-beta-L-fucose + NADP(+) = GDP-4-dehydro-alpha-D-rhamnose + NADPH + H(+). The protein operates within nucleotide-sugar biosynthesis; GDP-L-fucose biosynthesis via de novo pathway; GDP-L-fucose from GDP-alpha-D-mannose: step 2/2. Functionally, catalyzes the two-step NADP-dependent conversion of GDP-4-dehydro-6-deoxy-D-mannose to GDP-fucose, involving an epimerase and a reductase reaction. This Azorhizobium caulinodans (strain ATCC 43989 / DSM 5975 / JCM 20966 / LMG 6465 / NBRC 14845 / NCIMB 13405 / ORS 571) protein is GDP-L-fucose synthase.